A 103-amino-acid polypeptide reads, in one-letter code: Small ribosomal subunit protein uS10 (103 aa).

Belongs to the universal ribosomal protein uS10 family. In terms of assembly, part of the 30S ribosomal subunit.

Its function is as follows. Involved in the binding of tRNA to the ribosomes. This chain is Small ribosomal subunit protein uS10, found in Acinetobacter baylyi (strain ATCC 33305 / BD413 / ADP1).